The primary structure comprises 476 residues: Probable serine carboxypeptidase CPVL (476 aa).

A signal peptide spans 1-22 (MVGTMWKVIVSLVLLMPGSCDG). N-linked (GlcNAc...) asparagine glycosylation is found at asparagine 81 and asparagine 132. Serine 204 is a catalytic residue. N-linked (GlcNAc...) asparagine glycans are attached at residues asparagine 307 and asparagine 346. Catalysis depends on residues aspartate 388 and histidine 448.

It belongs to the peptidase S10 family.

In terms of biological role, may be involved in the digestion of phagocytosed particles in the lysosome, participation in an inflammatory protease cascade, and trimming of peptides for antigen presentation. The sequence is that of Probable serine carboxypeptidase CPVL (CPVL) from Pongo abelii (Sumatran orangutan).